We begin with the raw amino-acid sequence, 271 residues long: 2,3,4,5-tetrahydropyridine-2,6-dicarboxylate N-succinyltransferase (271 aa).

Residues Arg102 and Asp139 each contribute to the substrate site.

It belongs to the transferase hexapeptide repeat family. Homotrimer.

The protein localises to the cytoplasm. The enzyme catalyses (S)-2,3,4,5-tetrahydrodipicolinate + succinyl-CoA + H2O = (S)-2-succinylamino-6-oxoheptanedioate + CoA. Its pathway is amino-acid biosynthesis; L-lysine biosynthesis via DAP pathway; LL-2,6-diaminopimelate from (S)-tetrahydrodipicolinate (succinylase route): step 1/3. This is 2,3,4,5-tetrahydropyridine-2,6-dicarboxylate N-succinyltransferase from Coxiella burnetii (strain RSA 331 / Henzerling II).